The following is an 83-amino-acid chain: High-potential iron-sulfur protein (83 aa).

[4Fe-4S] cluster contacts are provided by Cys43, Cys46, Cys61, and Cys75.

The protein belongs to the high-potential iron-sulfur protein (HiPIP) family. Homodimer.

It is found in the periplasm. Its function is as follows. Specific class of high-redox-potential 4Fe-4S ferredoxins. Functions in anaerobic electron transport in most purple and in some other photosynthetic bacteria and in at least one genus (Paracoccus) of halophilic, denitrifying bacteria. In Thiocystis violacea, this protein is High-potential iron-sulfur protein.